The primary structure comprises 353 residues: Photosystem II D2 protein (353 aa).

Thr2 carries the N-acetylthreonine modification. The residue at position 2 (Thr2) is a Phosphothreonine. Residues 41–61 form a helical membrane-spanning segment; it reads CAYFAVGGWFTGTTFVTSWYT. His118 contacts chlorophyll a. A helical transmembrane segment spans residues 125–141; the sequence is GFMLRQFELARSVQLRP. The pheophytin a site is built by Gln130 and Asn143. Residues 153–166 traverse the membrane as a helical segment; that stretch reads VFVSVFLIYPLGQS. His198 is a binding site for chlorophyll a. Residues 208 to 228 traverse the membrane as a helical segment; the sequence is AALLCAIHGATVENTLFEDGD. Residues His215 and Phe262 each coordinate a plastoquinone. Position 215 (His215) interacts with Fe cation. His269 contacts Fe cation. A helical membrane pass occupies residues 279–295; that stretch reads GLWMSALGVVGLALNLR.

It belongs to the reaction center PufL/M/PsbA/D family. In terms of assembly, PSII is composed of 1 copy each of membrane proteins PsbA, PsbB, PsbC, PsbD, PsbE, PsbF, PsbH, PsbI, PsbJ, PsbK, PsbL, PsbM, PsbT, PsbX, PsbY, PsbZ, Psb30/Ycf12, at least 3 peripheral proteins of the oxygen-evolving complex and a large number of cofactors. It forms dimeric complexes. The cofactor is The D1/D2 heterodimer binds P680, chlorophylls that are the primary electron donor of PSII, and subsequent electron acceptors. It shares a non-heme iron and each subunit binds pheophytin, quinone, additional chlorophylls, carotenoids and lipids. There is also a Cl(-1) ion associated with D1 and D2, which is required for oxygen evolution. The PSII complex binds additional chlorophylls, carotenoids and specific lipids..

The protein localises to the plastid. It localises to the chloroplast thylakoid membrane. It catalyses the reaction 2 a plastoquinone + 4 hnu + 2 H2O = 2 a plastoquinol + O2. Its function is as follows. Photosystem II (PSII) is a light-driven water:plastoquinone oxidoreductase that uses light energy to abstract electrons from H(2)O, generating O(2) and a proton gradient subsequently used for ATP formation. It consists of a core antenna complex that captures photons, and an electron transfer chain that converts photonic excitation into a charge separation. The D1/D2 (PsbA/PsbD) reaction center heterodimer binds P680, the primary electron donor of PSII as well as several subsequent electron acceptors. D2 is needed for assembly of a stable PSII complex. The chain is Photosystem II D2 protein from Cicer arietinum (Chickpea).